The sequence spans 100 residues: Urease subunit gamma (100 aa).

Belongs to the urease gamma subunit family. In terms of assembly, heterotrimer of UreA (gamma), UreB (beta) and UreC (alpha) subunits. Three heterotrimers associate to form the active enzyme.

Its subcellular location is the cytoplasm. The catalysed reaction is urea + 2 H2O + H(+) = hydrogencarbonate + 2 NH4(+). Its pathway is nitrogen metabolism; urea degradation; CO(2) and NH(3) from urea (urease route): step 1/1. The sequence is that of Urease subunit gamma from Haemophilus influenzae (strain PittGG).